Reading from the N-terminus, the 178-residue chain is Large ribosomal subunit protein uL6 (178 aa).

This sequence belongs to the universal ribosomal protein uL6 family. In terms of assembly, part of the 50S ribosomal subunit.

This protein binds to the 23S rRNA, and is important in its secondary structure. It is located near the subunit interface in the base of the L7/L12 stalk, and near the tRNA binding site of the peptidyltransferase center. The sequence is that of Large ribosomal subunit protein uL6 from Nitrosococcus oceani (strain ATCC 19707 / BCRC 17464 / JCM 30415 / NCIMB 11848 / C-107).